We begin with the raw amino-acid sequence, 239 residues long: Ribonuclease PH (239 aa).

Residues Arg86 and 124–126 (GTR) contribute to the phosphate site.

Belongs to the RNase PH family. In terms of assembly, homohexameric ring arranged as a trimer of dimers.

The catalysed reaction is tRNA(n+1) + phosphate = tRNA(n) + a ribonucleoside 5'-diphosphate. In terms of biological role, phosphorolytic 3'-5' exoribonuclease that plays an important role in tRNA 3'-end maturation. Removes nucleotide residues following the 3'-CCA terminus of tRNAs; can also add nucleotides to the ends of RNA molecules by using nucleoside diphosphates as substrates, but this may not be physiologically important. Probably plays a role in initiation of 16S rRNA degradation (leading to ribosome degradation) during starvation. This chain is Ribonuclease PH, found in Rhodopseudomonas palustris (strain BisB18).